We begin with the raw amino-acid sequence, 130 residues long: Phosphoribosyl-ATP pyrophosphatase (130 aa).

It belongs to the PRA-PH family.

The protein localises to the cytoplasm. It carries out the reaction 1-(5-phospho-beta-D-ribosyl)-ATP + H2O = 1-(5-phospho-beta-D-ribosyl)-5'-AMP + diphosphate + H(+). It functions in the pathway amino-acid biosynthesis; L-histidine biosynthesis; L-histidine from 5-phospho-alpha-D-ribose 1-diphosphate: step 2/9. The chain is Phosphoribosyl-ATP pyrophosphatase from Albidiferax ferrireducens (strain ATCC BAA-621 / DSM 15236 / T118) (Rhodoferax ferrireducens).